A 192-amino-acid chain; its full sequence is Crossover junction endodeoxyribonuclease RuvC (192 aa).

Active-site residues include Asp9, Glu70, and Asp143. Mg(2+) is bound by residues Asp9, Glu70, and Asp143. A disordered region spans residues Gly161–Arg192. Residues Ser163–Pro176 are compositionally biased toward polar residues. A compositionally biased stretch (basic and acidic residues) spans Ala182–Arg192.

Belongs to the RuvC family. In terms of assembly, homodimer which binds Holliday junction (HJ) DNA. The HJ becomes 2-fold symmetrical on binding to RuvC with unstacked arms; it has a different conformation from HJ DNA in complex with RuvA. In the full resolvosome a probable DNA-RuvA(4)-RuvB(12)-RuvC(2) complex forms which resolves the HJ. Mg(2+) serves as cofactor.

Its subcellular location is the cytoplasm. The enzyme catalyses Endonucleolytic cleavage at a junction such as a reciprocal single-stranded crossover between two homologous DNA duplexes (Holliday junction).. The RuvA-RuvB-RuvC complex processes Holliday junction (HJ) DNA during genetic recombination and DNA repair. Endonuclease that resolves HJ intermediates. Cleaves cruciform DNA by making single-stranded nicks across the HJ at symmetrical positions within the homologous arms, yielding a 5'-phosphate and a 3'-hydroxyl group; requires a central core of homology in the junction. The consensus cleavage sequence is 5'-(A/T)TT(C/G)-3'. Cleavage occurs on the 3'-side of the TT dinucleotide at the point of strand exchange. HJ branch migration catalyzed by RuvA-RuvB allows RuvC to scan DNA until it finds its consensus sequence, where it cleaves and resolves the cruciform DNA. The chain is Crossover junction endodeoxyribonuclease RuvC from Pseudarthrobacter chlorophenolicus (strain ATCC 700700 / DSM 12829 / CIP 107037 / JCM 12360 / KCTC 9906 / NCIMB 13794 / A6) (Arthrobacter chlorophenolicus).